Reading from the N-terminus, the 490-residue chain is GDP-fucose protein O-fucosyltransferase 2 (490 aa).

Residues methionine 1–alanine 25 form the signal peptide. N-linked (GlcNAc...) asparagine glycans are attached at residues asparagine 29 and asparagine 79. Residue serine 81–asparagine 85 participates in GDP-beta-L-fucose binding. Glutamate 82 acts as the Proton acceptor in catalysis. The cysteines at positions 203 and 226 are disulfide-linked. Residue histidine 336–arginine 338 participates in GDP-beta-L-fucose binding. Asparagine 368 is a glycosylation site (N-linked (GlcNAc...) asparagine). GDP-beta-L-fucose contacts are provided by residues aspartate 418 and threonine 435–phenylalanine 436. A disulfide bond links cysteine 459 and cysteine 466.

Belongs to the glycosyltransferase 68 family.

The protein resides in the endoplasmic reticulum. It localises to the golgi apparatus. The catalysed reaction is L-seryl-[protein] + GDP-beta-L-fucose = 3-O-(alpha-L-fucosyl)-L-seryl-[protein] + GDP + H(+). It catalyses the reaction L-threonyl-[protein] + GDP-beta-L-fucose = 3-O-(alpha-L-fucosyl)-L-threonyl-[protein] + GDP + H(+). It participates in protein modification; protein glycosylation. Does not require divalent metal ions for optimal activity. Catalyzes the reaction that attaches fucose through an O-glycosidic linkage to a conserved serine or threonine residue in the consensus sequence C1-X-X-S/T-C2 of thrombospondin type I repeats (TSRs) where C1 and C2 are the first and second cysteines of the repeat, respectively. O-fucosylates members of several protein families including the ADAMTS, the thrombospondin (TSP) and spondin families. The protein is GDP-fucose protein O-fucosyltransferase 2 of Drosophila melanogaster (Fruit fly).